Here is an 86-residue protein sequence, read N- to C-terminus: YcgL domain-containing protein XAC4085 (86 aa).

The 83-residue stretch at 1 to 83 (MHAYVYKSQR…PKTIVLAGEC (83 aa)) folds into the YcgL domain.

The polypeptide is YcgL domain-containing protein XAC4085 (Xanthomonas axonopodis pv. citri (strain 306)).